Here is a 461-residue protein sequence, read N- to C-terminus: Probable lipid II flippase MurJ (461 aa).

The next 12 helical transmembrane spans lie at 5–25 (ILGAGVYSDIFFVAFKLPNLF), 51–71 (FASLVGLIFCIVLFMWCLLVA), 96–116 (IVAINFWYLLLVFITTFLGAL), 123–143 (FFASAYSASLLNVCMILALLI), 156–176 (LSYGVLLGGVAQILLHFYPLV), 229–249 (IASFLDTTIASFLASGSVSYL), 258–278 (LPLALFAIAISTALFPSIAIA), 293–313 (KAWFFLVGVLLLCSIGGIMLS), 337–357 (VFSLYLLGLLPFGLTKLFSLW), 372–392 (LISLFLGLAASLSLMPLLGVL), 402–422 (GLFLFVLTIKAFGFQLFLGII), and 429–449 (LVILFLACVEILLLLAFKSWV).

The protein belongs to the MurJ/MviN family.

The protein localises to the cell inner membrane. It participates in cell wall biogenesis; peptidoglycan biosynthesis. Involved in peptidoglycan biosynthesis. Transports lipid-linked peptidoglycan precursors from the inner to the outer leaflet of the cytoplasmic membrane. The chain is Probable lipid II flippase MurJ from Helicobacter pylori (strain ATCC 700392 / 26695) (Campylobacter pylori).